The following is a 188-amino-acid chain: Holliday junction branch migration complex subunit RuvA (188 aa).

Positions 1 to 64 (MIAGISGRVL…QDGITLYGFS (64 aa)) are domain I. The tract at residues 65–143 (NERKKELFLS…SAGIKDMRIY (79 aa)) is domain II. Position 143 (Tyr143) is a region of interest, flexible linker. Residues 143–188 (YHESLEALISLGYPEKQAREAVKHVYREGMKTSELIKEALKFLSQR) form a domain III region.

This sequence belongs to the RuvA family. As to quaternary structure, homotetramer. Forms an RuvA(8)-RuvB(12)-Holliday junction (HJ) complex. HJ DNA is sandwiched between 2 RuvA tetramers; dsDNA enters through RuvA and exits via RuvB. An RuvB hexamer assembles on each DNA strand where it exits the tetramer. Each RuvB hexamer is contacted by two RuvA subunits (via domain III) on 2 adjacent RuvB subunits; this complex drives branch migration. In the full resolvosome a probable DNA-RuvA(4)-RuvB(12)-RuvC(2) complex forms which resolves the HJ.

It is found in the cytoplasm. In terms of biological role, the RuvA-RuvB-RuvC complex processes Holliday junction (HJ) DNA during genetic recombination and DNA repair, while the RuvA-RuvB complex plays an important role in the rescue of blocked DNA replication forks via replication fork reversal (RFR). RuvA specifically binds to HJ cruciform DNA, conferring on it an open structure. The RuvB hexamer acts as an ATP-dependent pump, pulling dsDNA into and through the RuvAB complex. HJ branch migration allows RuvC to scan DNA until it finds its consensus sequence, where it cleaves and resolves the cruciform DNA. This chain is Holliday junction branch migration complex subunit RuvA, found in Thermotoga petrophila (strain ATCC BAA-488 / DSM 13995 / JCM 10881 / RKU-1).